The primary structure comprises 139 residues: Large ribosomal subunit protein uL16 (139 aa).

The segment at 1-21 is disordered; sequence MLMPKRVQYRKTQRGRMKGNA. Positions 7-17 are enriched in basic residues; sequence VQYRKTQRGRM.

Belongs to the universal ribosomal protein uL16 family. Part of the 50S ribosomal subunit.

Its function is as follows. Binds 23S rRNA and is also seen to make contacts with the A and possibly P site tRNAs. The polypeptide is Large ribosomal subunit protein uL16 (Chlorobaculum tepidum (strain ATCC 49652 / DSM 12025 / NBRC 103806 / TLS) (Chlorobium tepidum)).